A 128-amino-acid polypeptide reads, in one-letter code: Small ribosomal subunit protein uS11m (128 aa).

This sequence belongs to the universal ribosomal protein uS11 family.

It is found in the mitochondrion. This Prototheca wickerhamii protein is Small ribosomal subunit protein uS11m (RPS11).